Consider the following 151-residue polypeptide: Metallothiol transferase FosB (151 aa).

Residues 4 to 119 enclose the VOC domain; it reads SINHVTYSVS…DGHKFELHTG (116 aa). Residues His-7, His-66, and Glu-115 each contribute to the Mg(2+) site. The active-site Proton donor/acceptor is Glu-115.

It belongs to the fosfomycin resistance protein family. FosB subfamily. As to quaternary structure, homodimer. The cofactor is Mg(2+).

Its subcellular location is the cytoplasm. Functionally, metallothiol transferase which confers resistance to fosfomycin by catalyzing the addition of a thiol cofactor to fosfomycin. L-cysteine is probably the physiological thiol donor. The protein is Metallothiol transferase FosB of Staphylococcus saprophyticus subsp. saprophyticus (strain ATCC 15305 / DSM 20229 / NCIMB 8711 / NCTC 7292 / S-41).